The primary structure comprises 2197 residues: Protein Ycf2 (2197 aa).

Residue 1539–1546 coordinates ATP; it reads GSIGTGRS.

It belongs to the Ycf2 family.

Its subcellular location is the plastid. It localises to the chloroplast stroma. Functionally, probable ATPase of unknown function. Its presence in a non-photosynthetic plant (Epifagus virginiana) and experiments in tobacco indicate that it has an essential function which is probably not related to photosynthesis. This Ipomoea purpurea (Common morning glory) protein is Protein Ycf2.